The primary structure comprises 371 residues: tRNA-specific 2-thiouridylase MnmA (371 aa).

Residues 9–16 (AMSGGVDS) and methionine 35 contribute to the ATP site. Cysteine 109 (nucleophile) is an active-site residue. Cysteine 109 and cysteine 207 are disulfide-bonded. Glycine 133 provides a ligand contact to ATP. An interaction with tRNA region spans residues 157–159 (KDQ). Catalysis depends on cysteine 207, which acts as the Cysteine persulfide intermediate.

The protein belongs to the MnmA/TRMU family.

The protein localises to the cytoplasm. It carries out the reaction S-sulfanyl-L-cysteinyl-[protein] + uridine(34) in tRNA + AH2 + ATP = 2-thiouridine(34) in tRNA + L-cysteinyl-[protein] + A + AMP + diphosphate + H(+). Functionally, catalyzes the 2-thiolation of uridine at the wobble position (U34) of tRNA, leading to the formation of s(2)U34. The chain is tRNA-specific 2-thiouridylase MnmA from Solibacter usitatus (strain Ellin6076).